Here is a 79-residue protein sequence, read N- to C-terminus: Ferredoxin oxidoreductase 1 subunit ForD (79 aa).

2 4Fe-4S ferredoxin-type domains span residues 3–35 (YVAQVIKDECSKYNCKQCTLFCPEPNTLMYTDE) and 37–65 (HHAYVNTLRCKGCALCVYVCSELLKRDSI). The [4Fe-4S] cluster site is built by cysteine 12, cysteine 17, cysteine 20, cysteine 24, cysteine 46, cysteine 49, cysteine 52, and cysteine 56.

In terms of assembly, heterotetramer of one alpha, one beta, one delta and one gamma chain. [4Fe-4S] cluster serves as cofactor.

This is Ferredoxin oxidoreductase 1 subunit ForD (forD1) from Aquifex aeolicus (strain VF5).